We begin with the raw amino-acid sequence, 195 residues long: uncharacterized protein (195 aa).

Positions 86–158 (LPSEGGWTSG…PAPVSGEPPE (73 aa)) are disordered.

This is an uncharacterized protein from Homo sapiens (Human).